Consider the following 702-residue polypeptide: Phosphoglycerol transferase I (702 aa).

The next 3 helical transmembrane spans lie at 2-22 (HWIL…SPRL), 71-91 (FSGY…PLML), and 103-123 (GGAV…VSPV).

The protein belongs to the OpgB family.

The protein localises to the cell inner membrane. It catalyses the reaction a phosphatidylglycerol + a membrane-derived-oligosaccharide D-glucose = a 1,2-diacyl-sn-glycerol + a membrane-derived-oligosaccharide 6-(glycerophospho)-D-glucose.. The protein operates within glycan metabolism; osmoregulated periplasmic glucan (OPG) biosynthesis. Its function is as follows. Transfers a phosphoglycerol residue from phosphatidylglycerol to the membrane-bound nascent glucan backbones. In Xanthomonas campestris pv. campestris (strain B100), this protein is Phosphoglycerol transferase I.